The sequence spans 194 residues: Putative NAD(P)H nitroreductase YfhC (194 aa).

Residues Arg20–Ser22, Lys147–Ile148, and Arg188 each bind FMN.

Belongs to the nitroreductase family. FMN is required as a cofactor.

The chain is Putative NAD(P)H nitroreductase YfhC (yfhC) from Bacillus subtilis (strain 168).